The sequence spans 339 residues: MIDDRKLQILRAIIQDYISTGEPVGSRTIAKKYNLGVSSATIRNEMADLEDMGFLEQPHTSAGRIPSSRGYRLYVDRMIEFERLSSEEEGLIRNSIIDGTLYEVDKIIKQTSALLSELTKMTCIVKAPSVHKSFVKSIQLLKVDDVSILCVLVTDNGVIRNTVIKVKSVPISEELIKISKIITERLKNLTIEQINLEVISNLNRALNGYEDIVNAVLPALYESLKGDETSEVFLEGTINIFNYPEYNNIHKAKEILELLHDKKSISELISDSDDMTVKIGDEIFVPEAKECSIISAGYHVGDRSLGTIALIGPRRINYSKVLSIMTEVMKELNETLKNK.

The protein belongs to the HrcA family.

Functionally, negative regulator of class I heat shock genes (grpE-dnaK-dnaJ and groELS operons). Prevents heat-shock induction of these operons. The protein is Heat-inducible transcription repressor HrcA of Clostridium perfringens (strain SM101 / Type A).